The sequence spans 294 residues: Acetyl-coenzyme A carboxylase carboxyl transferase subunit beta (294 aa).

The 265-residue stretch at 30 to 294 (IMTKCPECKK…PEAGGESDGE (265 aa)) folds into the CoA carboxyltransferase N-terminal domain. Zn(2+)-binding residues include C34, C37, C53, and C56. The C4-type zinc-finger motif lies at 34-56 (CPECKKIMYTKELQKNLMVCNYC).

This sequence belongs to the AccD/PCCB family. Acetyl-CoA carboxylase is a heterohexamer composed of biotin carboxyl carrier protein (AccB), biotin carboxylase (AccC) and two subunits each of ACCase subunit alpha (AccA) and ACCase subunit beta (AccD). Requires Zn(2+) as cofactor.

It is found in the cytoplasm. The catalysed reaction is N(6)-carboxybiotinyl-L-lysyl-[protein] + acetyl-CoA = N(6)-biotinyl-L-lysyl-[protein] + malonyl-CoA. It functions in the pathway lipid metabolism; malonyl-CoA biosynthesis; malonyl-CoA from acetyl-CoA: step 1/1. In terms of biological role, component of the acetyl coenzyme A carboxylase (ACC) complex. Biotin carboxylase (BC) catalyzes the carboxylation of biotin on its carrier protein (BCCP) and then the CO(2) group is transferred by the transcarboxylase to acetyl-CoA to form malonyl-CoA. The chain is Acetyl-coenzyme A carboxylase carboxyl transferase subunit beta from Listeria innocua serovar 6a (strain ATCC BAA-680 / CLIP 11262).